The sequence spans 598 residues: Fructan 6-exohydrolase (598 aa).

A signal peptide spans 1–30 (MAARLPLAACVVAFHLCLLLSSLVRSPSTA). Asp65 is an active-site residue. N-linked (GlcNAc...) asparagine glycosylation is found at Asn93, Asn288, and Asn351. Cys451 and Cys497 are joined by a disulfide. N-linked (GlcNAc...) asparagine glycosylation occurs at Asn572.

This sequence belongs to the glycosyl hydrolase 32 family. Expressed in leaves, stems, roots and inflorescences. Maximum expression is detected in stems, particularly the penultimate internode.

The catalysed reaction is Hydrolysis of terminal, non-reducing (2-&gt;6)-linked beta-D-fructofuranose residues in fructans.. Not inhibited by sucrose. Its function is as follows. Hydrolyzes levan-type beta-(2-&gt;6)-linked fructans to fructose, but not inulin-type beta-(2-&gt;1)-linked fructans. In Triticum aestivum (Wheat), this protein is Fructan 6-exohydrolase.